Consider the following 105-residue polypeptide: Platelet factor 4 (105 aa).

The N-terminal stretch at 1–29 (MSAAAVFRGLRPSPELLLLGLLLLPAVVA) is a signal peptide. A glycan (O-linked (GalNAc...) threonine; partial) is linked at T31. Disulfide bonds link C44/C71 and C46/C87. S61 is modified (phosphoserine). Heparin is bound at residue 96–102 (KKIIKKL).

Belongs to the intercrine alpha (chemokine CxC) family. In terms of assembly, homotetramer. Interacts with TNFAIP6 (via Link domain). Interacts with CCR1. Interacts with CXCR3. Interacts with THBD; this interaction enhances generation of activated protein C. Post-translationally, O-linked glycan consists of Gal-GalNAc disaccharide which is modified with sialic acid residues (microheterogeneity).

It localises to the secreted. Its function is as follows. Chemokine released during platelet aggregation that plays a role in different biological processes including hematopoiesis, cell proliferation, differentiation, and activation. Acts via different functional receptors including CCR1, CXCR3A or CXCR3B. Upon interaction with CXCR3A receptor, induces activated T-lymphocytes migration mediated via downstream Ras/extracellular signal-regulated kinase (ERK) signaling. Neutralizes the anticoagulant effect of heparin by binding more strongly to heparin than to the chondroitin-4-sulfate chains of the carrier molecule. Plays a role in the inhibition of hematopoiesis and in the maintenance of hematopoietic stem cell (HSC) quiescence. Chemotactic for neutrophils and monocytes via CCR1. Inhibits endothelial cell proliferation. In cooperation with toll-like receptor 8/TLR8, induces chromatin remodeling and activates inflammatory gene expression via the TBK1-IRF5 axis. In addition, induces myofibroblast differentiation and collagen synthesis in different precursor cells, including endothelial cells, by stimulating endothelial-to-mesenchymal transition. Interacts with thrombomodulin/THBD to enhance the activation of protein C and thus potentiates its anticoagulant activity. The chain is Platelet factor 4 (Pf4) from Rattus norvegicus (Rat).